Reading from the N-terminus, the 403-residue chain is Queuine tRNA-ribosyltransferase catalytic subunit 1 (403 aa).

The residue at position 2 (Ala-2) is an N-acetylalanine. The Proton acceptor role is filled by Asp-105. A queuine-binding site is contributed by 105 to 109 (DSGGF). At Ser-139 the chain carries Phosphoserine. The queuine site is built by Asp-159, Gln-202, and Gly-229. Residues 260–266 (GVGYATD) form an RNA binding region. Catalysis depends on Asp-279, which acts as the Nucleophile. An RNA binding; important for wobble base 34 recognition region spans residues 284 to 288 (TRTAR). Residues Cys-317, Cys-319, Cys-322, and His-348 each contribute to the Zn(2+) site.

Belongs to the queuine tRNA-ribosyltransferase family. In terms of assembly, heterodimer of a catalytic subunit QTRT1 and an accessory subunit QTRT2. Zn(2+) is required as a cofactor.

The protein resides in the cytoplasm. The protein localises to the mitochondrion outer membrane. The catalysed reaction is guanosine(34) in tRNA + queuine = queuosine(34) in tRNA + guanine. Its function is as follows. Catalytic subunit of the queuine tRNA-ribosyltransferase (TGT) that catalyzes the base-exchange of a guanine (G) residue with queuine (Q) at position 34 (anticodon wobble position) in tRNAs with GU(N) anticodons (tRNA-Asp, -Asn, -His and -Tyr), resulting in the hypermodified nucleoside queuosine (7-(((4,5-cis-dihydroxy-2-cyclopenten-1-yl)amino)methyl)-7-deazaguanosine). Catalysis occurs through a double-displacement mechanism. The nucleophile active site attacks the C1' of nucleotide 34 to detach the guanine base from the RNA, forming a covalent enzyme-RNA intermediate. The proton acceptor active site deprotonates the incoming queuine, allowing a nucleophilic attack on the C1' of the ribose to form the product. This is Queuine tRNA-ribosyltransferase catalytic subunit 1 from Rattus norvegicus (Rat).